The sequence spans 208 residues: Large ribosomal subunit protein uL4 (208 aa).

A disordered region spans residues 58 to 77 (RGGGRKPWRQKGTGRARQGS). The segment covering 60-71 (GGRKPWRQKGTG) has biased composition (basic residues).

This sequence belongs to the universal ribosomal protein uL4 family. In terms of assembly, part of the 50S ribosomal subunit.

Functionally, one of the primary rRNA binding proteins, this protein initially binds near the 5'-end of the 23S rRNA. It is important during the early stages of 50S assembly. It makes multiple contacts with different domains of the 23S rRNA in the assembled 50S subunit and ribosome. In terms of biological role, forms part of the polypeptide exit tunnel. The polypeptide is Large ribosomal subunit protein uL4 (Caldicellulosiruptor bescii (strain ATCC BAA-1888 / DSM 6725 / KCTC 15123 / Z-1320) (Anaerocellum thermophilum)).